We begin with the raw amino-acid sequence, 216 residues long: Dephospho-CoA kinase (216 aa).

In terms of domain architecture, DPCK spans Ile-18–Lys-216. Cys-26–Thr-31 provides a ligand contact to ATP.

It belongs to the CoaE family.

The protein localises to the cytoplasm. It catalyses the reaction 3'-dephospho-CoA + ATP = ADP + CoA + H(+). The protein operates within cofactor biosynthesis; coenzyme A biosynthesis; CoA from (R)-pantothenate: step 5/5. In terms of biological role, catalyzes the phosphorylation of the 3'-hydroxyl group of dephosphocoenzyme A to form coenzyme A. The sequence is that of Dephospho-CoA kinase from Rhodopirellula baltica (strain DSM 10527 / NCIMB 13988 / SH1).